A 343-amino-acid polypeptide reads, in one-letter code: E3 ubiquitin-protein ligase RNF113A (343 aa).

N-acetylalanine is present on A2. The important for interaction with SNRNP200/BRR2 stretch occupies residues 2–60; that stretch reads AEQLSPGKAVDQVCTFLFKKPGRKGAAGRRKRPACDPEPGESGSSSDEGCTVVRPEKKR. Phosphoserine is present on S6. Basic residues predominate over residues 22-33; the sequence is PGRKGAAGRRKR. Positions 22 to 96 are disordered; that stretch reads PGRKGAAGRR…EEEENEPESL (75 aa). Positions 41–50 are enriched in low complexity; that stretch reads GESGSSSDEG. Positions 50 to 61 are important for interaction with CXCR4; sequence GCTVVRPEKKRV. Residues S84 and S85 each carry the phosphoserine modification. Over residues 84 to 93 the composition is skewed to acidic residues; it reads SSEEEEENEP. A C3H1-type zinc finger spans residues 196 to 224; the sequence is DYQPDICKDYKETGFCGFGDSCKFLHDRS. The residue at position 253 (S253) is a Phosphoserine. An RING-type zinc finger spans residues 262–300; sequence CFICRQSFQNPVVTKCRHYFCESCALQHFRTTPRCYVCD. A disordered region spans residues 322–343; the sequence is ATGEGGASDLPEDPDEDAIPIT. Positions 331–343 are enriched in acidic residues; sequence LPEDPDEDAIPIT.

In terms of assembly, component of pre-catalytic and catalytic spliceosome complexes. Interacts (via N-terminus) with the spliceosome subunit SNRNP200/BRR2. Component of the minor spliceosome, which splices U12-type introns. Within this complex, interacts with SCNM1 and CRIPT. As to expression, ubiquitous.

It is found in the nucleus. The protein localises to the nucleus speckle. It carries out the reaction S-ubiquitinyl-[E2 ubiquitin-conjugating enzyme]-L-cysteine + [acceptor protein]-L-lysine = [E2 ubiquitin-conjugating enzyme]-L-cysteine + N(6)-ubiquitinyl-[acceptor protein]-L-lysine.. It participates in protein modification; protein ubiquitination. Its function is as follows. Required for pre-mRNA splicing as component of the spliceosome. As a component of the minor spliceosome, involved in the splicing of U12-type introns in pre-mRNAs. E3 ubiquitin-protein ligase that catalyzes the transfer of ubiquitin onto target proteins. Catalyzes polyubiquitination of SNRNP200/BRR2 with non-canonical 'Lys-63'-linked polyubiquitin chains. Plays a role in DNA repair via its role in the synthesis of 'Lys-63'-linked polyubiquitin chains that recruit ALKBH3 and the ASCC complex to sites of DNA damage by alkylating agents. Ubiquitinates CXCR4, leading to its degradation, and thereby contributes to the termination of CXCR4 signaling. This is E3 ubiquitin-protein ligase RNF113A (RNF113A) from Homo sapiens (Human).